The chain runs to 692 residues: Elongation factor G (692 aa).

The region spanning 8–282 (ENTRNIGIMA…AVIDYLPSPL (275 aa)) is the tr-type G domain. Residues 17–24 (AHIDAGKT), 81–85 (DTPGH), and 135–138 (NKMD) each bind GTP.

The protein belongs to the TRAFAC class translation factor GTPase superfamily. Classic translation factor GTPase family. EF-G/EF-2 subfamily.

The protein resides in the cytoplasm. Catalyzes the GTP-dependent ribosomal translocation step during translation elongation. During this step, the ribosome changes from the pre-translocational (PRE) to the post-translocational (POST) state as the newly formed A-site-bound peptidyl-tRNA and P-site-bound deacylated tRNA move to the P and E sites, respectively. Catalyzes the coordinated movement of the two tRNA molecules, the mRNA and conformational changes in the ribosome. This is Elongation factor G from Bacillus anthracis (strain CDC 684 / NRRL 3495).